The chain runs to 178 residues: MAELTTLARPYAKAAFEHAQAHQQLANWSAMLGLAAAVSQDDTMQRVLKAPRLTSAEKAATFIDVCGDKFDAKAQNFINVVAENDRLPLLPEIAALFDLYKAEQEKSVDVEVTSAFALNQEQQDKLAKVLSARLNREVRLQVEEDSSLIGGVVIRAGDLVIDGSIRGKIAKLAEALKS.

The protein belongs to the ATPase delta chain family. In terms of assembly, F-type ATPases have 2 components, F(1) - the catalytic core - and F(0) - the membrane proton channel. F(1) has five subunits: alpha(3), beta(3), gamma(1), delta(1), epsilon(1). F(0) has three main subunits: a(1), b(2) and c(10-14). The alpha and beta chains form an alternating ring which encloses part of the gamma chain. F(1) is attached to F(0) by a central stalk formed by the gamma and epsilon chains, while a peripheral stalk is formed by the delta and b chains.

The protein resides in the cell inner membrane. F(1)F(0) ATP synthase produces ATP from ADP in the presence of a proton or sodium gradient. F-type ATPases consist of two structural domains, F(1) containing the extramembraneous catalytic core and F(0) containing the membrane proton channel, linked together by a central stalk and a peripheral stalk. During catalysis, ATP synthesis in the catalytic domain of F(1) is coupled via a rotary mechanism of the central stalk subunits to proton translocation. In terms of biological role, this protein is part of the stalk that links CF(0) to CF(1). It either transmits conformational changes from CF(0) to CF(1) or is implicated in proton conduction. The chain is ATP synthase subunit delta from Pseudomonas fluorescens (strain Pf0-1).